A 513-amino-acid polypeptide reads, in one-letter code: Cytochrome P450 monooxygenase CYP3 (513 aa).

Positions 1-21 are disordered; sequence MLPRSLGHSTSELSPPFDGPN. Cysteine 451 contributes to the heme binding site.

It belongs to the cytochrome P450 family. It depends on heme as a cofactor.

It functions in the pathway secondary metabolite biosynthesis. Cytochrome P450 monooxygenase; part of the gene cluster that mediates the biosynthesis of a tyrosine-derived cytochalasan acting as a fungal signal recognized by resistant rice plants and leads to avirulence in Pi33 resistant rice cultivars. The first step in the pathway is catalyzed by the hybrid PKS-NRPS ACE1, assisted by the enoyl reductase RAP1, that are responsible for fusion of the tyrosine precursor and the polyketide backbone. The polyketide synthase module (PKS) of ACE1 is responsible for the synthesis of the polyketide backbone and the downstream nonribosomal peptide synthetase (NRPS) amidates the carboxyl end of the polyketide with the tyrosine precursor. Because ACE1 lacks a designated enoylreductase (ER) domain, the required activity is provided the enoyl reductase RAP1. Reduction by the hydrolyase ORFZ, followed by dehydration and intra-molecular Diels-Alder cyclization by the Diels-Alderase ORF3 then yield the required isoindolone-fused macrocycle. A number of oxidative steps catalyzed by the tailoring enzymes identified within the cluster, including cytochrome P450 monooxygenases CYP1 to CYP4, the FAD-linked oxidoreductase OXR2 and the short-chain dehydrogenase/reductase OXR1, are further required to afford the final cytochalasans that confer avirulence and which have still to be identified. The monooxygenase CYP1 has been shown to be a site-selective C-18 hydroxylase whereas the function of CYP3 is the site-selective epoxidation of the C-6/C-7 olefin that is present in some intermediate compounds. Finally, SYN2 and RAP2 are not required for avirulence in Pi33 resistant rice cultivars. This is Cytochrome P450 monooxygenase CYP3 from Pyricularia oryzae (strain 70-15 / ATCC MYA-4617 / FGSC 8958) (Rice blast fungus).